The sequence spans 298 residues: HTH-type transcriptional regulator ArgP (298 aa).

Positions 4–60 (LDYKWIEALDAVVYQGSFERAAEHLFVSQSAISQRIKQLEKFLAQPVLIREQPPKPT) constitute an HTH lysR-type domain. Positions 21–40 (FERAAEHLFVSQSAISQRIK) form a DNA-binding region, H-T-H motif.

The protein belongs to the LysR transcriptional regulatory family. In terms of assembly, homodimer.

In terms of biological role, controls the transcription of genes involved in arginine and lysine metabolism. This chain is HTH-type transcriptional regulator ArgP, found in Vibrio parahaemolyticus serotype O3:K6 (strain RIMD 2210633).